A 338-amino-acid chain; its full sequence is D-xylulose reductase (338 aa).

Zn(2+) is bound by residues Cys-40, His-65, and Glu-151.

Belongs to the zinc-containing alcohol dehydrogenase family. Homotetramer. Zn(2+) is required as a cofactor.

The enzyme catalyses xylitol + NAD(+) = D-xylulose + NADH + H(+). The polypeptide is D-xylulose reductase (Morganella morganii (Proteus morganii)).